A 403-amino-acid chain; its full sequence is RNA-binding motif, single-stranded-interacting protein 1 (403 aa).

The tract at residues 30–56 (PAHPMAPPSPSTTSSNNNSSSSSNSGW) is disordered. The segment covering 40–54 (STTSSNNNSSSSSNS) has biased composition (low complexity). RRM domains follow at residues 62–135 (TNLY…MAKQ) and 141–226 (TNLY…FADG). Position 208 is a phosphothreonine (Thr-208). Over residues 382–395 (GQQQVAVETSNDHS) the composition is skewed to polar residues. Residues 382–403 (GQQQVAVETSNDHSPYTFPPNK) form a disordered region.

Ubiquitous. Expressed in all tissues except testis.

The protein localises to the nucleus. In terms of biological role, single-stranded DNA binding protein that interacts with the region upstream of the MYC gene. Binds specifically to the DNA sequence motif 5'-[AT]CT[AT][AT]T-3'. Probably has a role in DNA replication. The protein is RNA-binding motif, single-stranded-interacting protein 1 (Rbms1) of Mus musculus (Mouse).